Consider the following 472-residue polypeptide: Methanethiol oxidase (472 aa).

At Ala2 the chain carries N-acetylalanine. Residues Ser111, Ser371, and Ser467 each carry the phosphoserine modification.

The protein belongs to the selenium-binding protein family. In terms of assembly, interacts with USP33. In terms of processing, phosphorylated. Post-translationally, the N-terminus is blocked. Widely expressed. Highly expressed in liver, lung, colon, prostate, kidney and pancreas. In brain, present both in neurons and glia (at protein level). Down-regulated in lung adenocarcinoma, colorectal carcinoma and ovarian cancer. Two-fold up-regulated in brain and blood from schizophrenia patients.

Its subcellular location is the nucleus. The protein localises to the cytoplasm. The protein resides in the cytosol. It localises to the membrane. It catalyses the reaction methanethiol + O2 + H2O = hydrogen sulfide + formaldehyde + H2O2 + H(+). The protein operates within organosulfur degradation. Catalyzes the oxidation of methanethiol, an organosulfur compound known to be produced in substantial amounts by gut bacteria. Selenium-binding protein which may be involved in the sensing of reactive xenobiotics in the cytoplasm. May be involved in intra-Golgi protein transport. The polypeptide is Methanethiol oxidase (SELENBP1) (Homo sapiens (Human)).